The primary structure comprises 469 residues: IAA-alanine resistance protein 1 (469 aa).

Positions 1-28 (MSFSLRKLLVPILVLVLFLDLCVESGFS) are cleaved as a signal peptide. Residues 33 to 58 (ARDDHVHHHGGGCSHSHDHDHDHDHD) form a disordered region. The segment covering 47 to 58 (HSHDHDHDHDHD) has biased composition (basic and acidic residues). A run of 2 helical transmembrane segments spans residues 114 to 134 (CSLLVSLASLICLVLLPIMFV) and 141 to 161 (WFVDSLALFGAGAMLGDAFLH). Residues 170-197 (GHSHSNDHHENHDHHDHSHSDSPSHSHS) form a disordered region. The segment covering 173 to 193 (HSNDHHENHDHHDHSHSDSPS) has biased composition (basic and acidic residues). A helical transmembrane segment spans residues 201 to 221 (LSVGLSVLAGIVVFLLVEKLV). Positions 228-315 (SSGSNTWGHH…GKSDKPEQVE (88 aa)) are disordered. Basic residues predominate over residues 235-246 (GHHHHHHHAGSK). Positions 247–256 (KLKDEGDHNN) are enriched in basic and acidic residues. The segment covering 257-279 (LDQQSSSDAIVNSSEKVSGGSTD) has biased composition (polar residues). The span at 292 to 315 (ATDKSDSGTEITSDGKSDKPEQVE) shows a compositional bias: basic and acidic residues. The next 3 helical transmembrane spans lie at 387-407 (LFFNFLSALVALAGTALVLVW), 415-435 (SLIEGFTAGGFIYIAVAGVLA), and 448-468 (SACHLISLILGMSVALCISLI).

Belongs to the ZIP transporter (TC 2.A.5) family. KE4/Catsup subfamily.

Its subcellular location is the membrane. Functionally, may participate in auxin metabolism or response. Probable transporter. This chain is IAA-alanine resistance protein 1 (IAR1), found in Arabidopsis thaliana (Mouse-ear cress).